Here is a 250-residue protein sequence, read N- to C-terminus: MLRILLSNDDGITAPGIQTLAAALREFAQVQIVAPDRNRSGSSNALTLDSALRITTLSNGDIAVQQGTPTDCVYLGVNALMRPRPDIVVSGINAGPNLGDDVIYSGTVAAAMEGRHLGFPALAVSLNGQQHYATAAAVTCRILRALQHKPLRTGKILNINIPDLPLSEIKGIRVTRCGSRHPAEQVFCQQDPRGQDLYWIGPPGEKFDVAEDTDFAAVEQGYVSITPLQVDLTAYGAQDVVENWLASMAD.

The a divalent metal cation site is built by D9, D10, S40, and N93.

This sequence belongs to the SurE nucleotidase family. The cofactor is a divalent metal cation.

It localises to the cytoplasm. It carries out the reaction a ribonucleoside 5'-phosphate + H2O = a ribonucleoside + phosphate. It catalyses the reaction a ribonucleoside 3'-phosphate + H2O = a ribonucleoside + phosphate. The catalysed reaction is [phosphate](n) + H2O = [phosphate](n-1) + phosphate + H(+). In terms of biological role, nucleotidase with a broad substrate specificity as it can dephosphorylate various ribo- and deoxyribonucleoside 5'-monophosphates and ribonucleoside 3'-monophosphates with highest affinity to 3'-AMP. Also hydrolyzes polyphosphate (exopolyphosphatase activity) with the preference for short-chain-length substrates (P20-25). Might be involved in the regulation of dNTP and NTP pools, and in the turnover of 3'-mononucleotides produced by numerous intracellular RNases (T1, T2, and F) during the degradation of various RNAs. This chain is 5'/3'-nucleotidase SurE, found in Yersinia enterocolitica serotype O:8 / biotype 1B (strain NCTC 13174 / 8081).